The chain runs to 228 residues: Ribosomal RNA small subunit methyltransferase G (228 aa).

Residues Gly89, Leu94, 140–141 (VE), and Arg159 each bind S-adenosyl-L-methionine.

The protein belongs to the methyltransferase superfamily. RNA methyltransferase RsmG family.

Its subcellular location is the cytoplasm. The enzyme catalyses guanosine(527) in 16S rRNA + S-adenosyl-L-methionine = N(7)-methylguanosine(527) in 16S rRNA + S-adenosyl-L-homocysteine. Functionally, specifically methylates the N7 position of guanine in position 527 of 16S rRNA. The protein is Ribosomal RNA small subunit methyltransferase G of Burkholderia vietnamiensis (strain G4 / LMG 22486) (Burkholderia cepacia (strain R1808)).